A 254-amino-acid chain; its full sequence is Alcohol dehydrogenase (254 aa).

10–33 (FVAGLGGIGLDTSREIVKSGPKNL) is a binding site for NAD(+). Serine 138 is a binding site for substrate. Tyrosine 151 serves as the catalytic Proton acceptor.

It belongs to the short-chain dehydrogenases/reductases (SDR) family. As to quaternary structure, homodimer.

It carries out the reaction a primary alcohol + NAD(+) = an aldehyde + NADH + H(+). The enzyme catalyses a secondary alcohol + NAD(+) = a ketone + NADH + H(+). This Drosophila lacicola (Fruit fly) protein is Alcohol dehydrogenase (Adh1).